The chain runs to 423 residues: Histidine--tRNA ligase (423 aa).

Belongs to the class-II aminoacyl-tRNA synthetase family. As to quaternary structure, homodimer.

Its subcellular location is the cytoplasm. It carries out the reaction tRNA(His) + L-histidine + ATP = L-histidyl-tRNA(His) + AMP + diphosphate + H(+). In Haemophilus influenzae (strain ATCC 51907 / DSM 11121 / KW20 / Rd), this protein is Histidine--tRNA ligase (hisS).